Consider the following 358-residue polypeptide: Protein IncC (358 aa).

Residues 1 to 101 are disordered; sequence MGAIHEETAN…VGSRRQEETG (101 aa). Basic and acidic residues predominate over residues 88–99; the sequence is HRQEVGSRRQEE.

The protein belongs to the ParA family.

This is one of the proteins encoded by the trfB operon; it is involved in plasmid maintenance and replication. This Escherichia coli protein is Protein IncC (incC).